Reading from the N-terminus, the 365-residue chain is 2-aminoethylphosphonate--pyruvate transaminase (365 aa).

N6-(pyridoxal phosphate)lysine is present on K194.

It belongs to the class-V pyridoxal-phosphate-dependent aminotransferase family. PhnW subfamily. In terms of assembly, homodimer. It depends on pyridoxal 5'-phosphate as a cofactor.

It carries out the reaction (2-aminoethyl)phosphonate + pyruvate = phosphonoacetaldehyde + L-alanine. Involved in phosphonate degradation. This chain is 2-aminoethylphosphonate--pyruvate transaminase, found in Bacillus cereus (strain Q1).